A 152-amino-acid polypeptide reads, in one-letter code: Deoxyuridine 5'-triphosphate nucleotidohydrolase (152 aa).

Substrate is bound by residues 72 to 74 (RSG), Asn-85, and 89 to 91 (TID).

Belongs to the dUTPase family. Mg(2+) is required as a cofactor.

It carries out the reaction dUTP + H2O = dUMP + diphosphate + H(+). It participates in pyrimidine metabolism; dUMP biosynthesis; dUMP from dCTP (dUTP route): step 2/2. Its function is as follows. This enzyme is involved in nucleotide metabolism: it produces dUMP, the immediate precursor of thymidine nucleotides and it decreases the intracellular concentration of dUTP so that uracil cannot be incorporated into DNA. The chain is Deoxyuridine 5'-triphosphate nucleotidohydrolase from Rhodopseudomonas palustris (strain HaA2).